The following is a 174-amino-acid chain: Large ribosomal subunit protein uL10 (174 aa).

This sequence belongs to the universal ribosomal protein uL10 family. In terms of assembly, part of the ribosomal stalk of the 50S ribosomal subunit. The N-terminus interacts with L11 and the large rRNA to form the base of the stalk. The C-terminus forms an elongated spine to which L12 dimers bind in a sequential fashion forming a multimeric L10(L12)X complex.

Forms part of the ribosomal stalk, playing a central role in the interaction of the ribosome with GTP-bound translation factors. The chain is Large ribosomal subunit protein uL10 from Trichlorobacter lovleyi (strain ATCC BAA-1151 / DSM 17278 / SZ) (Geobacter lovleyi).